Here is a 1392-residue protein sequence, read N- to C-terminus: DNA-directed RNA polymerase subunit beta (1392 aa).

This sequence belongs to the RNA polymerase beta chain family. In terms of assembly, the RNAP catalytic core consists of 2 alpha, 1 beta, 1 beta' and 1 omega subunit. When a sigma factor is associated with the core the holoenzyme is formed, which can initiate transcription.

It catalyses the reaction RNA(n) + a ribonucleoside 5'-triphosphate = RNA(n+1) + diphosphate. Functionally, DNA-dependent RNA polymerase catalyzes the transcription of DNA into RNA using the four ribonucleoside triphosphates as substrates. The polypeptide is DNA-directed RNA polymerase subunit beta (Neisseria gonorrhoeae (strain ATCC 700825 / FA 1090)).